Here is a 1377-residue protein sequence, read N- to C-terminus: Dicer-like protein 2 (1377 aa).

The Helicase ATP-binding domain occupies 23 to 203; sequence MFEASLKENI…MKTLESNLDS (181 aa). 36-43 contacts ATP; that stretch reads MDTGTGKT. A DEAH box motif is present at residues 144-147; it reads DEAH. In terms of domain architecture, Helicase C-terminal spans 368-531; it reads ALINFLDKFD…AYQDEERRLR (164 aa). In terms of domain architecture, Dicer dsRNA-binding fold spans 561-655; the sequence is VVTHLYHFCA…LPLTKNPEMR (95 aa). RNase III domains lie at 914–1052 and 1092–1275; these read RLCA…LDGG and DGDL…VDSG. Residues Glu-1131, Asp-1261, and Glu-1264 each coordinate Mg(2+).

It belongs to the helicase family. Dicer subfamily. Mg(2+) is required as a cofactor. Mn(2+) serves as cofactor.

In terms of biological role, dicer-like endonuclease involved in cleaving double-stranded RNA in the RNA interference (RNAi) pathway. Produces 21 to 25 bp dsRNAs (siRNAs) which target the selective destruction of homologous RNAs leading to sequence-specific suppression of gene expression, called post-transcriptional gene silencing (PTGS). Part of a broad host defense response against viral infection and transposons. The chain is Dicer-like protein 2 (dcl2) from Aspergillus oryzae (strain ATCC 42149 / RIB 40) (Yellow koji mold).